The chain runs to 1204 residues: Exportin-5 (1204 aa).

Ala-2 bears the N-acetylalanine mark. The segment at 2-108 is necessary for interaction with Ran; that stretch reads AMDQVNALCE…ANGTLNILEE (107 aa). N6-acetyllysine is present on Lys-396. Residues 533-640 form a necessary for interaction with ILF3 region; the sequence is ELLQMVLNFD…KQLLSNELLL (108 aa). A pre-miRNA binding region spans residues 641 to 642; sequence TQ. Residue Ser-826 is modified to Phosphoserine.

The protein belongs to the exportin family. Component of a nuclear export receptor complex composed of XPO5, RAN, dsRNA-binding proteins and dsRNA. Found in a nuclear export complex with XPO5, RAN, EEF1A1, and aminoacylated tRNA. Found in a nuclear export complex with XPO5, RAN, ILF3 and dsRNA. Found in a nuclear export complex with XPO5, RAN and pre-miRNA. Found in a nuclear export complex with XPO5, RAN, ILF3 and minihelix VA1 dsRNA. Found in a nuclear export complex with XPO5, RAN, ILF3, ZNF346 and dsRNA. Interacts with EEF1A1, ILF3, NUP153, NUP214 and ZNF346. Interacts with RAN and cargo proteins in a GTP-dependent manner. Interacts with isoform 5 of ADAR/ADAR1 (via DRBM domains). Interacts with SMAD4; mediates nuclear export of SMAD4. Interacts with RAN (GTP-bound form). In terms of tissue distribution, expressed in heart, brain, placenta, lung, skeletal muscle, kidney and pancreas.

It is found in the nucleus. The protein localises to the cytoplasm. In terms of biological role, mediates the nuclear export of proteins bearing a double-stranded RNA binding domain (dsRBD) and double-stranded RNAs (cargos). XPO5 in the nucleus binds cooperatively to the RNA and to the GTPase Ran in its active GTP-bound form. Proteins containing dsRBDs can associate with this trimeric complex through the RNA. Docking of this complex to the nuclear pore complex (NPC) is mediated through binding to nucleoporins. Upon transit of a nuclear export complex into the cytoplasm, hydrolysis of Ran-GTP to Ran-GDP (induced by RANBP1 and RANGAP1, respectively) cause disassembly of the complex and release of the cargo from the export receptor. XPO5 then returns to the nuclear compartment by diffusion through the nuclear pore complex, to mediate another round of transport. The directionality of nuclear export is thought to be conferred by an asymmetric distribution of the GTP- and GDP-bound forms of Ran between the cytoplasm and nucleus. Overexpression may in some circumstances enhance RNA-mediated gene silencing (RNAi). Mediates nuclear export of isoform 5 of ADAR/ADAR1 in a RanGTP-dependent manner. Its function is as follows. Mediates the nuclear export of micro-RNA precursors, which form short hairpins. Also mediates the nuclear export of synthetic short hairpin RNAs used for RNA interference. In some circumstances can also mediate the nuclear export of deacylated and aminoacylated tRNAs. Specifically recognizes dsRNAs that lack a 5'-overhang in a sequence-independent manner, have only a short 3'-overhang, and that have a double-stranded length of at least 15 base-pairs. Binding is dependent on Ran-GTP. Functionally, (Microbial infection) Mediates the nuclear export of adenovirus VA1 dsRNA. In Homo sapiens (Human), this protein is Exportin-5 (XPO5).